The chain runs to 232 residues: Ion-translocating oxidoreductase complex subunit E (232 aa).

A run of 6 helical transmembrane segments spans residues 12 to 31 (LWRN…LLAV), 39 to 59 (LGLG…VSAL), 69 to 89 (IPIY…LINA), 92 to 112 (FGLY…CIVI), 125 to 145 (ALAA…LLLL), and 182 to 202 (PFLL…MLVG).

This sequence belongs to the NqrDE/RnfAE family. As to quaternary structure, the complex is composed of six subunits: RnfA, RnfB, RnfC, RnfD, RnfE and RnfG.

The protein localises to the cell inner membrane. Its function is as follows. Part of a membrane-bound complex that couples electron transfer with translocation of ions across the membrane. The polypeptide is Ion-translocating oxidoreductase complex subunit E (Sodalis glossinidius (strain morsitans)).